The sequence spans 298 residues: Diphthine methyl ester synthase (298 aa).

S-adenosyl-L-methionine is bound by residues leucine 9, aspartate 85, glycine 88, 113 to 114 (SV), leucine 164, leucine 222, and histidine 247.

The protein belongs to the diphthine synthase family.

It localises to the cytoplasm. It catalyses the reaction 2-[(3S)-amino-3-carboxypropyl]-L-histidyl-[translation elongation factor 2] + 4 S-adenosyl-L-methionine = diphthine methyl ester-[translation elongation factor 2] + 4 S-adenosyl-L-homocysteine + 3 H(+). Its pathway is protein modification; peptidyl-diphthamide biosynthesis. Functionally, S-adenosyl-L-methionine-dependent methyltransferase that catalyzes four methylations of the modified target histidine residue in translation elongation factor 2 (EF-2), to form an intermediate called diphthine methyl ester. The four successive methylation reactions represent the second step of diphthamide biosynthesis. The polypeptide is Diphthine methyl ester synthase (DPH5) (Kluyveromyces lactis (strain ATCC 8585 / CBS 2359 / DSM 70799 / NBRC 1267 / NRRL Y-1140 / WM37) (Yeast)).